The primary structure comprises 360 residues: UDP-N-acetylglucosamine--N-acetylmuramyl-(pentapeptide) pyrophosphoryl-undecaprenol N-acetylglucosamine transferase (360 aa).

Residues 14–16 (TGG), Asn-131, Arg-167, Ser-195, Ile-249, and Gln-294 each bind UDP-N-acetyl-alpha-D-glucosamine.

This sequence belongs to the glycosyltransferase 28 family. MurG subfamily.

It is found in the cell inner membrane. It catalyses the reaction di-trans,octa-cis-undecaprenyl diphospho-N-acetyl-alpha-D-muramoyl-L-alanyl-D-glutamyl-meso-2,6-diaminopimeloyl-D-alanyl-D-alanine + UDP-N-acetyl-alpha-D-glucosamine = di-trans,octa-cis-undecaprenyl diphospho-[N-acetyl-alpha-D-glucosaminyl-(1-&gt;4)]-N-acetyl-alpha-D-muramoyl-L-alanyl-D-glutamyl-meso-2,6-diaminopimeloyl-D-alanyl-D-alanine + UDP + H(+). It functions in the pathway cell wall biogenesis; peptidoglycan biosynthesis. Cell wall formation. Catalyzes the transfer of a GlcNAc subunit on undecaprenyl-pyrophosphoryl-MurNAc-pentapeptide (lipid intermediate I) to form undecaprenyl-pyrophosphoryl-MurNAc-(pentapeptide)GlcNAc (lipid intermediate II). The protein is UDP-N-acetylglucosamine--N-acetylmuramyl-(pentapeptide) pyrophosphoryl-undecaprenol N-acetylglucosamine transferase of Polaromonas naphthalenivorans (strain CJ2).